A 67-amino-acid chain; its full sequence is Large ribosomal subunit protein bL32 (67 aa).

Residues 1–44 (MAVQQNRKSPSKRDMRRSHDALGFSTLSTDSKSGERHRRHHVTK) are disordered. Residues 11–20 (SKRDMRRSHD) are compositionally biased toward basic and acidic residues.

Belongs to the bacterial ribosomal protein bL32 family.

This chain is Large ribosomal subunit protein bL32, found in Dichelobacter nodosus (strain VCS1703A).